A 195-amino-acid polypeptide reads, in one-letter code: Thymidylate kinase (195 aa).

7–14 (GIDGSGKT) lines the ATP pocket.

It belongs to the thymidylate kinase family.

The catalysed reaction is dTMP + ATP = dTDP + ADP. In terms of biological role, phosphorylation of dTMP to form dTDP in both de novo and salvage pathways of dTTP synthesis. This is Thymidylate kinase (tmk) from Aquifex aeolicus (strain VF5).